Here is a 209-residue protein sequence, read N- to C-terminus: Superoxide dismutase [Mn/Fe] (209 aa).

Fe(3+)-binding residues include H38, H90, D172, and H176. 4 residues coordinate Mn(2+): H38, H90, D172, and H176.

Belongs to the iron/manganese superoxide dismutase family. Mn(2+) serves as cofactor. Requires Fe(3+) as cofactor.

It catalyses the reaction 2 superoxide + 2 H(+) = H2O2 + O2. Functionally, destroys superoxide anion radicals which are normally produced within the cells and which are toxic to biological systems. Catalyzes the dismutation of superoxide anion radicals into O2 and H2O2 by successive reduction and oxidation of the transition metal ion at the active site. The sequence is that of Superoxide dismutase [Mn/Fe] (sodB) from Rickettsia prowazekii (strain Madrid E).